Consider the following 695-residue polypeptide: uncharacterized protein (695 aa).

Disordered stretches follow at residues 1 to 112 (MSRL…KHKK) and 242 to 262 (MKKVSQQLKPQKNTNDSNNDH). Residues 32–47 (DSSSSSDSPNFFPSSS) are compositionally biased toward low complexity. The span at 96-107 (KTEKEKEKEPIQ) shows a compositional bias: basic and acidic residues. A tr-type G domain is found at 278–492 (KPRTKLLLLG…KIDKEADTNH (215 aa)). GTP contacts are provided by residues 287 to 294 (GPPKSGKK), 357 to 361 (IFTTN), and 417 to 420 (TKMD).

The protein belongs to the TRAFAC class translation factor GTPase superfamily. Classic translation factor GTPase family.

The protein resides in the cytoplasm. Its subcellular location is the nucleus. This is an uncharacterized protein from Schizosaccharomyces pombe (strain 972 / ATCC 24843) (Fission yeast).